The primary structure comprises 286 residues: Aquaporin PIP1-1 (286 aa).

An N-acetylmethionine modification is found at Met-1. The interval 1-34 is disordered; the sequence is MEGKEEDVRVGANKFPERQPIGTSAQSDKDYKEP. Residues 1 to 54 are Cytoplasmic-facing; that stretch reads MEGKEEDVRVGANKFPERQPIGTSAQSDKDYKEPPPAPFFEPGELSSWSFWRAG. A helical membrane pass occupies residues 55-75; that stretch reads IAEFIATFLFLYITVLTVMGV. The Extracellular segment spans residues 76 to 91; that stretch reads KRSPNMCASVGIQGIA. Residues 92–112 traverse the membrane as a helical segment; the sequence is WAFGGMIFALVYCTAGISGGH. The Cytoplasmic segment spans residues 113 to 132; sequence INPAVTFGLFLARKLSLTRA. Residues 114–116 carry the NPA 1 motif; sequence NPA. A helical membrane pass occupies residues 133–153; the sequence is LYYIVMQCLGAICGAGVVKGF. Topologically, residues 154–174 are extracellular; it reads QPKQYQALGGGANTVAHGYTK. Residues 175–195 form a helical membrane-spanning segment; it reads GSGLGAEIIGTFVLVYTVFSA. Residues 196–208 are Cytoplasmic-facing; the sequence is TDAKRNARDSHVP. The chain crosses the membrane as a helical span at residues 209–229; that stretch reads ILAPLPIGFAVFLVHLATIPI. Residues 230–256 are Extracellular-facing; the sequence is TGTGINPARSLGAAIIYNKDHSWDDHW. The NPA 2 motif lies at 235–237; the sequence is NPA. The helical transmembrane segment at 257–277 threads the bilayer; the sequence is VFWVGPFIGAALAALYHVVVI. The Cytoplasmic portion of the chain corresponds to 278–286; the sequence is RAIPFKSRS. A Phosphoserine modification is found at Ser-284.

The protein belongs to the MIP/aquaporin (TC 1.A.8) family. PIP (TC 1.A.8.11) subfamily. As to expression, widely expressed. Expressed in roots, above ground and in flower buds.

It is found in the cell membrane. In terms of biological role, water channel required to facilitate the transport of water across cell membrane. Its function is impaired by Hg(2+). The protein is Aquaporin PIP1-1 (PIP1-1) of Arabidopsis thaliana (Mouse-ear cress).